Here is a 244-residue protein sequence, read N- to C-terminus: Phosphoadenosine 5'-phosphosulfate reductase (244 aa).

Cys239 functions as the Nucleophile; cysteine thiosulfonate intermediate in the catalytic mechanism.

Belongs to the PAPS reductase family. CysH subfamily.

Its subcellular location is the cytoplasm. It carries out the reaction [thioredoxin]-disulfide + sulfite + adenosine 3',5'-bisphosphate + 2 H(+) = [thioredoxin]-dithiol + 3'-phosphoadenylyl sulfate. Its pathway is sulfur metabolism; hydrogen sulfide biosynthesis; sulfite from sulfate: step 3/3. Functionally, catalyzes the formation of sulfite from phosphoadenosine 5'-phosphosulfate (PAPS) using thioredoxin as an electron donor. The sequence is that of Phosphoadenosine 5'-phosphosulfate reductase from Shigella dysenteriae serotype 1 (strain Sd197).